The chain runs to 208 residues: Glutathione S-transferase F6 (208 aa).

One can recognise a GST N-terminal domain in the interval 2–83; it reads AGIKVFGHPA…YIAHEFSDKG (82 aa). Residues 12–13, 41–42, 54–55, and 67–68 contribute to the glutathione site; these read ST, HK, KV, and ES. The GST C-terminal domain occupies 89 to 208; it reads TGKDMAIIAM…TSRPSAQKVL (120 aa).

The protein belongs to the GST superfamily. Phi family.

Its subcellular location is the cytoplasm. It is found in the cytosol. It carries out the reaction RX + glutathione = an S-substituted glutathione + a halide anion + H(+). Functionally, involved in camalexin biosynthesis by probably catalyzing the conjugation of GSH with indole-3-acetonitrile (IAN). May be involved in the conjugation of reduced glutathione to a wide number of exogenous and endogenous hydrophobic electrophiles and have a detoxification role against certain herbicides. The polypeptide is Glutathione S-transferase F6 (GSTF6) (Arabidopsis thaliana (Mouse-ear cress)).